Here is a 339-residue protein sequence, read N- to C-terminus: Peroxidase 29 (339 aa).

Positions 1–28 (MKPKSKVAESTAASCFLVMSLLCSCIIG) are cleaved as a signal peptide. Disulfide bonds link cysteine 47/cysteine 127, cysteine 80/cysteine 85, cysteine 133/cysteine 335, and cysteine 213/cysteine 242. Catalysis depends on histidine 78, which acts as the Proton acceptor. Aspartate 79, valine 82, glycine 84, aspartate 86, and serine 88 together coordinate Ca(2+). Proline 176 is a substrate binding site. Histidine 206 provides a ligand contact to heme b. Threonine 207 contacts Ca(2+). The N-linked (GlcNAc...) asparagine glycan is linked to asparagine 224. Positions 260, 262, and 267 each coordinate Ca(2+).

The protein belongs to the peroxidase family. Classical plant (class III) peroxidase subfamily. Heme b is required as a cofactor. It depends on Ca(2+) as a cofactor.

It is found in the secreted. It catalyses the reaction 2 a phenolic donor + H2O2 = 2 a phenolic radical donor + 2 H2O. Functionally, removal of H(2)O(2), oxidation of toxic reductants, biosynthesis and degradation of lignin, suberization, auxin catabolism, response to environmental stresses such as wounding, pathogen attack and oxidative stress. These functions might be dependent on each isozyme/isoform in each plant tissue. The sequence is that of Peroxidase 29 (PER29) from Arabidopsis thaliana (Mouse-ear cress).